Reading from the N-terminus, the 442-residue chain is MENAKMNSLIAQYPLVKDLVALKETTWFNPGTTSLAEGLPYVGLTEQDVQDAHARLSRFAPYLAKAFPETAATGGIIESELVAIPAMQKRLEKEYQQPISGQLLLKKDSHLPISGSIKARGGIYEVLAHAEKLALEAGLLTLEDDYSKLLSPEFKQFFSQYSIAVGSTGNLGLSIGIMSARIGFKVTVHMSADARAWKKAKLRSHGVTVVEYEQDYGVAVEEGRKAAQSDPNCFFIDDENSRTLFLGYSVAGQRLKAQFAEQGRIVDADNPLFVYLPCGVGGGPGGVAFGLKLAFGDHVHCFFAEPTHSPCMLLGVHTGLHDQISVQDIGIDNLTAADGLAVGRASGFVGRAMERLLDGFYTLSDQTMYDMLGWLAQEEGIRLEPSALAGMAGPQRVCASVSYQQMHGFSAEQLRNATHLVWATGGGMVPEEEMEQYLAKGR.

Lys-118 carries the post-translational modification N6-(pyridoxal phosphate)lysine.

It belongs to the serine/threonine dehydratase family. DsdA subfamily. Monomer. Pyridoxal 5'-phosphate serves as cofactor.

The catalysed reaction is D-serine = pyruvate + NH4(+). The polypeptide is D-serine dehydratase (Escherichia coli O157:H7).